Reading from the N-terminus, the 189-residue chain is Mediator of RNA polymerase II transcription subunit 30 (189 aa).

Positions 138 to 178 form a coiled coil; the sequence is SPESEDEIEKLEEQALSLRMEIAKKNVHVKELIDKLRELIA.

Belongs to the plant Mediator complex subunit 30 family. In terms of assembly, component of the Mediator complex.

It localises to the nucleus. Functionally, component of the Mediator complex, a coactivator involved in the regulated transcription of nearly all RNA polymerase II-dependent genes. Mediator functions as a bridge to convey information from gene-specific regulatory proteins to the basal RNA polymerase II transcription machinery. The Mediator complex, having a compact conformation in its free form, is recruited to promoters by direct interactions with regulatory proteins and serves for the assembly of a functional preinitiation complex with RNA polymerase II and the general transcription factors. In Arabidopsis thaliana (Mouse-ear cress), this protein is Mediator of RNA polymerase II transcription subunit 30 (MED30).